A 483-amino-acid polypeptide reads, in one-letter code: Regulatory protein ViaA (483 aa).

It belongs to the ViaA family. As to quaternary structure, homodimer. Interacts with RavA.

It is found in the cytoplasm. Functionally, component of the RavA-ViaA chaperone complex, which may act on the membrane to optimize the function of some of the respiratory chains. ViaA stimulates the ATPase activity of RavA. The chain is Regulatory protein ViaA from Shigella sonnei (strain Ss046).